The sequence spans 391 residues: E3 ubiquitin-protein ligase RMND5A (391 aa).

One can recognise a LisH domain in the interval 114-146; that stretch reads SQQILSEVMVEHFFRQGMLDVAEELCQEAGLSI. The 58-residue stretch at 153 to 210 folds into the CTLH domain; sequence PFVELNRILEALKVRVLRPALEWAVSNREMLMAQNSSLEFKLHRLYFISLLMGGTVNQ. Residues 336-377 form an RING-Gid-type zinc finger; that stretch reads CPILRQQTTDNNPPMKLVCGHIISRDALNKMFNGSKLKCPYC.

As to quaternary structure, identified in the CTLH complex that contains at least RANBP9, MKLN1, MAEA, RMND5A, GID8 and ARMC8.

Its subcellular location is the nucleus. It is found in the nucleoplasm. The protein resides in the cytoplasm. The catalysed reaction is S-ubiquitinyl-[E2 ubiquitin-conjugating enzyme]-L-cysteine + [acceptor protein]-L-lysine = [E2 ubiquitin-conjugating enzyme]-L-cysteine + N(6)-ubiquitinyl-[acceptor protein]-L-lysine.. Functionally, E3 ubiquitin-protein ligase component of the CTLH complex. This is E3 ubiquitin-protein ligase RMND5A (rmnd5a) from Xenopus tropicalis (Western clawed frog).